The chain runs to 323 residues: Protease Do-like 5, chloroplastic (323 aa).

The N-terminal 28 residues, 1 to 28, are a transit peptide targeting the chloroplast; the sequence is MTMALASSKAFSSIFNTLSPINQSKFVL. A thylakoid-targeting transit peptide spans 29 to 73; the sequence is ACSGSNHVDVIDRRRRIMIFGSSLALTSSLLGSNQQRLPMESAIA. Residues His147, Asp188, and Ser266 each act as charge relay system in the active site. The tract at residues 186–283 is serine protease; it reads DNDLAVLKIE…YGHTIGVNTA (98 aa).

The protein belongs to the peptidase S1C family.

The protein resides in the plastid. It is found in the chloroplast thylakoid lumen. In terms of biological role, probable serine protease. This Arabidopsis thaliana (Mouse-ear cress) protein is Protease Do-like 5, chloroplastic (DEGP5).